A 29-amino-acid chain; its full sequence is Cytochrome b6-f complex subunit 8 (29 aa).

A helical membrane pass occupies residues 3-23 (IVSLAWAALMVVFTFSLSLVV).

Belongs to the PetN family. In terms of assembly, the 4 large subunits of the cytochrome b6-f complex are cytochrome b6, subunit IV (17 kDa polypeptide, PetD), cytochrome f and the Rieske protein, while the 4 small subunits are PetG, PetL, PetM and PetN. The complex functions as a dimer.

It localises to the plastid. The protein resides in the chloroplast thylakoid membrane. In terms of biological role, component of the cytochrome b6-f complex, which mediates electron transfer between photosystem II (PSII) and photosystem I (PSI), cyclic electron flow around PSI, and state transitions. This Solanum bulbocastanum (Wild potato) protein is Cytochrome b6-f complex subunit 8.